The sequence spans 425 residues: Serine--tRNA ligase (425 aa).

231–233 (TAE) contacts L-serine. 262-264 (RSE) is an ATP binding site. Glu285 lines the L-serine pocket. Residue 349-352 (EISS) coordinates ATP. Position 385 (Ser385) interacts with L-serine.

The protein belongs to the class-II aminoacyl-tRNA synthetase family. Type-1 seryl-tRNA synthetase subfamily. In terms of assembly, homodimer. The tRNA molecule binds across the dimer.

The protein resides in the cytoplasm. It carries out the reaction tRNA(Ser) + L-serine + ATP = L-seryl-tRNA(Ser) + AMP + diphosphate + H(+). The catalysed reaction is tRNA(Sec) + L-serine + ATP = L-seryl-tRNA(Sec) + AMP + diphosphate + H(+). The protein operates within aminoacyl-tRNA biosynthesis; selenocysteinyl-tRNA(Sec) biosynthesis; L-seryl-tRNA(Sec) from L-serine and tRNA(Sec): step 1/1. Its function is as follows. Catalyzes the attachment of serine to tRNA(Ser). Is also able to aminoacylate tRNA(Sec) with serine, to form the misacylated tRNA L-seryl-tRNA(Sec), which will be further converted into selenocysteinyl-tRNA(Sec). This chain is Serine--tRNA ligase, found in Halalkalibacterium halodurans (strain ATCC BAA-125 / DSM 18197 / FERM 7344 / JCM 9153 / C-125) (Bacillus halodurans).